The primary structure comprises 291 residues: N-acetylmannosamine kinase (291 aa).

ATP-binding positions include 5–12 (AIDIGGTK) and 132–139 (GVGGGVVS). 4 residues coordinate Zn(2+): His156, Cys166, Cys168, and Cys173.

This sequence belongs to the ROK (NagC/XylR) family. NanK subfamily. Homodimer.

The enzyme catalyses an N-acyl-D-mannosamine + ATP = an N-acyl-D-mannosamine 6-phosphate + ADP + H(+). It functions in the pathway amino-sugar metabolism; N-acetylneuraminate degradation; D-fructose 6-phosphate from N-acetylneuraminate: step 2/5. Catalyzes the phosphorylation of N-acetylmannosamine (ManNAc) to ManNAc-6-P. This Shigella boydii serotype 18 (strain CDC 3083-94 / BS512) protein is N-acetylmannosamine kinase.